Consider the following 514-residue polypeptide: Polygalacturonase (514 aa).

A signal peptide spans 1–22; that stretch reads MAMKFIAPMAFVAMQLIIMAAA. The propeptide occupies 23-45; sequence EDQSAQIMLDSDIEQYLRSNRSL. 5 PbH1 repeats span residues 214 to 240, 241 to 262, 264 to 284, 294 to 315, and 323 to 344; these read CEGV…DIFA, SKNF…AIGT, SSNI…SIGS, VSYV…RIKT, and ASHI…LINQ. Aspartate 255 serves as the catalytic Proton donor. Histidine 278 is a catalytic residue. The propeptide occupies 434–514; that stretch reads AKRKESKSHK…CSRHGKIYHP (81 aa). N-linked (GlcNAc...) asparagine glycans are attached at residues asparagine 460 and asparagine 472.

It belongs to the glycosyl hydrolase 28 family.

It localises to the secreted. It is found in the plastid. Its subcellular location is the amyloplast. The protein localises to the cell wall. It catalyses the reaction (1,4-alpha-D-galacturonosyl)n+m + H2O = (1,4-alpha-D-galacturonosyl)n + (1,4-alpha-D-galacturonosyl)m.. This is Polygalacturonase from Cryptomeria japonica (Japanese cedar).